The sequence spans 425 residues: Perilipin-2 (425 aa).

Alanine 2 is modified (N-acetylalanine). Position 213 is a phosphoserine (serine 213). Tyrosine 230 is modified (phosphotyrosine).

The protein belongs to the perilipin family. In terms of assembly, interacts with IRGC. Acylated; primarily with C14, C16 and C18 fatty acids. In terms of processing, phosphorylation at Tyr-230 by isoform 1 of CHKA (CHKalpha2) promotes dissociation from lipid droplets: dissociation is followed by recruitment of autophagosome machinery to lipid droplets and subsequent lipid droplet lipolysis. Post-translationally, polyubiquitination of Nt-acetylatable A-PLIN2 by MARCHF6 lead to degradation by 26S proteasomes. In terms of tissue distribution, adipose tissue specific. Expressed abundantly and preferentially in fat pads.

It localises to the membrane. The protein resides in the lipid droplet. Functionally, structural component of lipid droplets, which is required for the formation and maintenance of lipid storage droplets. The polypeptide is Perilipin-2 (Mus musculus (Mouse)).